Here is a 512-residue protein sequence, read N- to C-terminus: 2,3-bisphosphoglycerate-independent phosphoglycerate mutase (512 aa).

Mn(2+)-binding residues include D12 and S62. The Phosphoserine intermediate role is filled by S62. Substrate is bound by residues H123, 153–154 (RD), R185, R191, 260–263 (RPDR), and K333. 5 residues coordinate Mn(2+): D400, H404, D441, H442, and H460.

It belongs to the BPG-independent phosphoglycerate mutase family. In terms of assembly, monomer. Mn(2+) serves as cofactor.

The catalysed reaction is (2R)-2-phosphoglycerate = (2R)-3-phosphoglycerate. The protein operates within carbohydrate degradation; glycolysis; pyruvate from D-glyceraldehyde 3-phosphate: step 3/5. In terms of biological role, catalyzes the interconversion of 2-phosphoglycerate and 3-phosphoglycerate. The sequence is that of 2,3-bisphosphoglycerate-independent phosphoglycerate mutase from Clostridium perfringens (strain ATCC 13124 / DSM 756 / JCM 1290 / NCIMB 6125 / NCTC 8237 / Type A).